The primary structure comprises 601 residues: Glutathione-regulated potassium-efflux system protein KefB (601 aa).

A run of 13 helical transmembrane segments spans residues 4–24 (SDLLLAGVLFLFAAVIAVPLA), 29–49 (IGAVLGYLLAGIAIGPWGLGF), 55–75 (EILHFSELGVVFLMFIIGLEL), 87–107 (IFGVGAAQVMLSAAILGGLLM), 115–135 (AAVVGGIGLAMSSTAMALQLM), 152–172 (VLLFQDLAVIPALALVPLLAG), 177–197 (HVNWLTVGMKVLAFAGMLIGG), 207–227 (FIASSGVREVFTAATLLLVLG), 230–250 (LFMEALGLSMALGTFIAGVLL), 268–288 (GLLLGLFFISVGMALNLGVLY), 291–311 (LLWVAVSVAVLVAVKMLVLYL), 326–346 (FAGVLSQGGEFAFVLFSLPAS), and 356–376 (ALLLVAVTLSMMTTPLLMKGI). Residues 400–519 (KPQVIIVGFG…AGVTQFSRET (120 aa)) form the RCK N-terminal domain.

The protein belongs to the monovalent cation:proton antiporter 2 (CPA2) transporter (TC 2.A.37) family. KefB subfamily. In terms of assembly, interacts with the regulatory subunit KefG.

It localises to the cell inner membrane. In terms of biological role, pore-forming subunit of a potassium efflux system that confers protection against electrophiles. Catalyzes K(+)/H(+) antiport. This chain is Glutathione-regulated potassium-efflux system protein KefB, found in Klebsiella pneumoniae subsp. pneumoniae (strain ATCC 700721 / MGH 78578).